An 87-amino-acid chain; its full sequence is uncharacterized protein (87 aa).

This is an uncharacterized protein from Ureaplasma parvum serovar 3 (strain ATCC 700970).